A 437-amino-acid polypeptide reads, in one-letter code: tRNA-2-methylthio-N(6)-dimethylallyladenosine synthase (437 aa).

One can recognise an MTTase N-terminal domain in the interval 1–115; it reads MKVYIETMGC…ISQVIHKEKA (115 aa). The [4Fe-4S] cluster site is built by cysteine 10, cysteine 46, cysteine 78, cysteine 148, cysteine 152, and cysteine 155. A Radical SAM core domain is found at 134–367; that stretch reads KKAQIRSLLN…QNRHKEILEE (234 aa). A TRAM domain is found at 370-436; it reads KLEVGKTHVV…KGRLMATTKG (67 aa).

It belongs to the methylthiotransferase family. MiaB subfamily. Monomer. [4Fe-4S] cluster is required as a cofactor.

It is found in the cytoplasm. The catalysed reaction is N(6)-dimethylallyladenosine(37) in tRNA + (sulfur carrier)-SH + AH2 + 2 S-adenosyl-L-methionine = 2-methylsulfanyl-N(6)-dimethylallyladenosine(37) in tRNA + (sulfur carrier)-H + 5'-deoxyadenosine + L-methionine + A + S-adenosyl-L-homocysteine + 2 H(+). Functionally, catalyzes the methylthiolation of N6-(dimethylallyl)adenosine (i(6)A), leading to the formation of 2-methylthio-N6-(dimethylallyl)adenosine (ms(2)i(6)A) at position 37 in tRNAs that read codons beginning with uridine. This is tRNA-2-methylthio-N(6)-dimethylallyladenosine synthase from Helicobacter pylori (strain G27).